We begin with the raw amino-acid sequence, 1093 residues long: MTPVKVWQERVEIPTYETGPQDIHPMFLENRVYQGSSGAVYPYGVTDTLSEQKTLKSWQAVWLENDYIKVMILPELGGRVHRAWDKVKQRDFVYHNEVIKPALVGLLGPWISGGIEFNWPQHHRPTTFMPVDFTLEAHEDGAQTVWVGETEPMHGLQVMTGFTLRPDRAALEIASRVYNGNATPRHFLWWANPAVKGGEGHQSVFPPDVTAVFDHGKRAVSAFPIATGTYYKVDYSAGVDISRYKNVPVPTSYMAEKSQYDFVGAWCHDEDGGLLHVANHHIAPGKKQWSWGHSEFGQAWDKSLTDNNGPYIELMTGIFADNQPDFTWLDAYEEKRFEQYFLPYHSLGMVQNASRDAVIKLQRSKRGIEWGLYAISPLNGYRLAIREIGKCNALLDDAVALMPATAIQGVLHGINPERLTIELSDADGNIVLSYQEHQPQALPLPDVAKAPLAAQDITSTDEAWFIGQHLEQYHHASRSPFDYYLRGVALDPLDYRCNLALAMLEYNRADFPQAVAYATQALKRAHALNKNPQCGQASLIRASAYERQGQYQQAEEDFWRAVWSGNSKAGGYYGLARLAARNGNFDAGLDFCQQSLRACPTNQEVLCLHNLLLVLSGRQDNARVQREKLLRDYPLNATLWWLNWFDGRSESALAQWRGLCQGRDVNALMTAGQLINWGMPTLAAEMLNALDCQRTLPLYLQASLLPKAERGELVAKAIDVFPQFVRFPNTLEEVAALESIEECWFARHLLACFYYNKRSYNKAIAFWQRCVEMSPEFADGWRGLAIHAWNKQHDYELAARYLDNAYQLAPQDARLLFERDLLDKLSGATPEKRLARLENNLEIALKRDDMTAELLNLWHLTGQADKAADILATRKFHPWEGGEGKVTSQFILNQLLRAWQHLDARQPQQACELLHAALHYPENLSEGRLPGQTDNDIWFWQAICANAQGDETEATRCLRLAATGDRTINIHSYYNDQPVDYLFWQGMALRLLGEQQTAQQLFSEMKQWAQEMAKTSIEADFFAVSQPDLLSLYGDLQQQHKEKCLMVAMLASAGLGEVAQYESARAELTAINPAWPKAALFTTVMPFIFNRVH.

This is an uncharacterized protein from Escherichia coli (strain K12).